Consider the following 380-residue polypeptide: 1-deoxy-D-xylulose 5-phosphate reductoisomerase (380 aa).

NADPH contacts are provided by Thr-10, Gly-11, Ser-12, Ile-13, Gly-36, Arg-37, Asn-38, and Asn-120. Position 121 (Lys-121) interacts with 1-deoxy-D-xylulose 5-phosphate. Residue Glu-122 coordinates NADPH. Asp-146 lines the Mn(2+) pocket. Residues Ser-147, Glu-148, Ser-172, and His-195 each coordinate 1-deoxy-D-xylulose 5-phosphate. Mn(2+) is bound at residue Glu-148. Gly-201 is a binding site for NADPH. Positions 208, 213, 214, and 217 each coordinate 1-deoxy-D-xylulose 5-phosphate. Glu-217 provides a ligand contact to Mn(2+).

Belongs to the DXR family. It depends on Mg(2+) as a cofactor. Mn(2+) is required as a cofactor.

It carries out the reaction 2-C-methyl-D-erythritol 4-phosphate + NADP(+) = 1-deoxy-D-xylulose 5-phosphate + NADPH + H(+). It functions in the pathway isoprenoid biosynthesis; isopentenyl diphosphate biosynthesis via DXP pathway; isopentenyl diphosphate from 1-deoxy-D-xylulose 5-phosphate: step 1/6. In terms of biological role, catalyzes the NADPH-dependent rearrangement and reduction of 1-deoxy-D-xylulose-5-phosphate (DXP) to 2-C-methyl-D-erythritol 4-phosphate (MEP). The polypeptide is 1-deoxy-D-xylulose 5-phosphate reductoisomerase (Listeria monocytogenes serotype 4b (strain F2365)).